We begin with the raw amino-acid sequence, 172 residues long: Early nodulin-like protein 17 (172 aa).

The first 26 residues, 1–26 (MARFTVLITAVVLAFLMAAPMPGVTA), serve as a signal peptide directing secretion. Residues 27–127 (KKYTVGENKF…GMKLSVKVEK (101 aa)) form the Phytocyanin domain. Residues Asn-42, Asn-73, Asn-88, and Asn-101 are each glycosylated (N-linked (GlcNAc...) asparagine). A disulfide bridge links Cys-80 with Cys-115. A lipid anchor (GPI-anchor amidated glycine) is attached at Gly-141. Residues 142–172 (SVSMVTGLAQFMIPVSLFAFPAMWDVISRMW) constitute a propeptide, removed in mature form.

Belongs to the early nodulin-like (ENODL) family.

Its subcellular location is the cell membrane. In terms of biological role, may act as a carbohydrate transporter. The sequence is that of Early nodulin-like protein 17 from Arabidopsis thaliana (Mouse-ear cress).